We begin with the raw amino-acid sequence, 201 residues long: Dephospho-CoA kinase (201 aa).

Residues 4–201 (AFFVTASIAC…VIQEISKGKM (198 aa)) form the DPCK domain. 12 to 17 (ACGKST) provides a ligand contact to ATP.

It belongs to the CoaE family.

The protein resides in the cytoplasm. The enzyme catalyses 3'-dephospho-CoA + ATP = ADP + CoA + H(+). The protein operates within cofactor biosynthesis; coenzyme A biosynthesis; CoA from (R)-pantothenate: step 5/5. Catalyzes the phosphorylation of the 3'-hydroxyl group of dephosphocoenzyme A to form coenzyme A. This Campylobacter jejuni (strain RM1221) protein is Dephospho-CoA kinase.